The primary structure comprises 570 residues: Adenine deaminase (570 aa).

Belongs to the metallo-dependent hydrolases superfamily. Adenine deaminase family. It depends on Mn(2+) as a cofactor.

It catalyses the reaction adenine + H2O + H(+) = hypoxanthine + NH4(+). This chain is Adenine deaminase, found in Oleidesulfovibrio alaskensis (strain ATCC BAA-1058 / DSM 17464 / G20) (Desulfovibrio alaskensis).